The chain runs to 157 residues: Probable succinate transporter subunit YjjB (157 aa).

A run of 4 helical transmembrane segments spans residues 2–22 (GIIS…IPAV), 55–75 (AGFN…SIGI), 87–107 (IFTV…TAMI), and 129–149 (FLKA…PGLW).

Belongs to the ThrE exporter (TC 2.A.79) family. The transporter is composed of YjjB and YjjP.

The protein resides in the cell inner membrane. In terms of biological role, involved in succinate export with YjjP. Both proteins are required for export. The sequence is that of Probable succinate transporter subunit YjjB from Klebsiella pneumoniae subsp. pneumoniae (strain ATCC 700721 / MGH 78578).